The sequence spans 489 residues: Protein DETOXIFICATION 26 (489 aa).

The next 12 helical transmembrane spans lie at 42–62 (IWYI…ILII), 75–95 (LAAI…LLLG), 125–145 (IILF…TPIL), 157–177 (LTGT…FFFP), 190–210 (VIAI…WFFV), 217–237 (IIGT…ILFL), 271–291 (IMLC…GNLV), 300–320 (LSIC…FFAG), 342–362 (IVSI…IVIF), 385–405 (VLLA…GVAV), 416–436 (INLG…GWIF), and 442–462 (GIWA…LIII).

The protein belongs to the multi antimicrobial extrusion (MATE) (TC 2.A.66.1) family.

The protein localises to the membrane. The polypeptide is Protein DETOXIFICATION 26 (Arabidopsis thaliana (Mouse-ear cress)).